Consider the following 403-residue polypeptide: Shaggy-related protein kinase GSK4 (403 aa).

Residues 71 to 355 enclose the Protein kinase domain; sequence YMAERVVGTG…ALEACAHSFF (285 aa). ATP is bound by residues 77–85 and lysine 100; that span reads VGTGSFGVV. Catalysis depends on aspartate 196, which acts as the Proton acceptor.

It belongs to the protein kinase superfamily. CMGC Ser/Thr protein kinase family. GSK-3 subfamily. As to quaternary structure, interacts with LIC.

It carries out the reaction L-seryl-[protein] + ATP = O-phospho-L-seryl-[protein] + ADP + H(+). The enzyme catalyses L-threonyl-[protein] + ATP = O-phospho-L-threonyl-[protein] + ADP + H(+). In terms of biological role, probable serine-threonine kinase that may regulate brassinosteroid signaling. The polypeptide is Shaggy-related protein kinase GSK4 (Oryza sativa subsp. japonica (Rice)).